Consider the following 447-residue polypeptide: UDP-N-acetylmuramate--L-alanine ligase (447 aa).

Residue 108-114 participates in ATP binding; that stretch reads GSHGKTS.

This sequence belongs to the MurCDEF family.

The protein resides in the cytoplasm. The enzyme catalyses UDP-N-acetyl-alpha-D-muramate + L-alanine + ATP = UDP-N-acetyl-alpha-D-muramoyl-L-alanine + ADP + phosphate + H(+). It functions in the pathway cell wall biogenesis; peptidoglycan biosynthesis. Cell wall formation. The polypeptide is UDP-N-acetylmuramate--L-alanine ligase (Listeria monocytogenes serovar 1/2a (strain ATCC BAA-679 / EGD-e)).